A 275-amino-acid polypeptide reads, in one-letter code: Vitamin B12-binding protein (275 aa).

A signal peptide spans 1 to 19 (MMNKICLYLPLFFSSLTMA). A Fe/B12 periplasmic-binding domain is found at 25–272 (RVISLAPHAT…EVCEHFESVK (248 aa)). A disulfide bridge connects residues cysteine 185 and cysteine 265.

This sequence belongs to the BtuF family. As to quaternary structure, the complex is composed of two ATP-binding proteins (BtuD), two transmembrane proteins (BtuC) and a solute-binding protein (BtuF).

The protein resides in the periplasm. Part of the ABC transporter complex BtuCDF involved in vitamin B12 import. Binds vitamin B12 and delivers it to the periplasmic surface of BtuC. This chain is Vitamin B12-binding protein, found in Vibrio parahaemolyticus serotype O3:K6 (strain RIMD 2210633).